The following is a 165-amino-acid chain: Cysteine-rich hydrophobic domain-containing protein 2 (165 aa).

The stretch at 1–26 (MADFDEIYEEEEDEERALEEQLLKYS) forms a coiled coil. Residues 88 to 106 (CGCLCCCCTLGCSMWPVIC) carry the CHIC motif (Cys-rich) motif.

The protein belongs to the CHIC family. In terms of processing, palmitoylation in the CHIC motif is required for membrane association.

The protein localises to the membrane. It localises to the golgi apparatus. In Mus musculus (Mouse), this protein is Cysteine-rich hydrophobic domain-containing protein 2 (Chic2).